We begin with the raw amino-acid sequence, 275 residues long: Translation initiation factor 2 subunit alpha (275 aa).

The 72-residue stretch at 12 to 83 (GEFVVATVKR…RKGHIDLSLR (72 aa)) folds into the S1 motif domain.

This sequence belongs to the eIF-2-alpha family. Heterotrimer composed of an alpha, a beta and a gamma chain.

Functionally, eIF-2 functions in the early steps of protein synthesis by forming a ternary complex with GTP and initiator tRNA. The sequence is that of Translation initiation factor 2 subunit alpha (eif2a) from Pyrococcus horikoshii (strain ATCC 700860 / DSM 12428 / JCM 9974 / NBRC 100139 / OT-3).